Consider the following 614-residue polypeptide: DNA repair protein rad26 (614 aa).

Over residues 29–43 the composition is skewed to low complexity; that stretch reads QAQTQVQAQSSQVVV. Disordered regions lie at residues 29 to 76 and 157 to 214; these read QAQT…QASL and KKMK…TAED. Composition is skewed to polar residues over residues 50–76 and 181–190; these read QNLNLPNSYTNSSQKVRESTVNSQASL and LLSSSDQLAK. Residues 191–207 are compositionally biased toward basic residues; sequence STKHAAKNSPSKKKRKT.

As to quaternary structure, interacts with cds1.

The protein localises to the nucleus. Involved in cell cycle arrest when DNA synthesis is inhibited by hydroxyurea, and in mitosis arrest after treatment with DNA-damaging agents. This protein is S phase-specific. This chain is DNA repair protein rad26 (rad26), found in Schizosaccharomyces pombe (strain 972 / ATCC 24843) (Fission yeast).